A 616-amino-acid polypeptide reads, in one-letter code: Coagulation factor XII (616 aa).

Residues 1 to 19 (MRALLLLGILLVSLESALL) form the signal peptide. One can recognise a Fibronectin type-II domain in the interval 42 to 90 (VTGEPCHFPFQYYRQLYYKCIQRGQRGPRPWCATTPNFEKDQRWAYCLE). Intrachain disulfides connect Cys47–Cys73, Cys61–Cys88, Cys98–Cys110, Cys104–Cys119, Cys121–Cys130, Cys135–Cys163, Cys161–Cys170, Cys178–Cys189, Cys183–Cys198, Cys200–Cys209, Cys217–Cys295, Cys238–Cys277, and Cys266–Cys290. The region spanning 94–131 (VKDHCNKGNPCQKGGTCVNMPNGPHCICPDHFTGKHCQ) is the EGF-like 1 domain. O-linked (Fuc) threonine glycosylation is present at Thr109. Residues 133-173 (EKCFEPQFLQFFQENEIWHRFEPAGVSKCQCKGPKAQCKPV) form the Fibronectin type-I domain. Positions 174–210 (ASQVCSTNPCLNGGSCLQTEGHRLCRCPTGYAGRLCD) constitute an EGF-like 2 domain. The region spanning 216 to 295 (RCYSDRGLSY…SWQYCRLARC (80 aa)) is the Kringle domain. Residues Asn249, Asn271, and Asn335 are each glycosylated (N-linked (GlcNAc...) asparagine). A disordered region spans residues 303–342 (PPILTPTQSPSEHQDSPLLSREPQPTTQTPSQNLTSAWCA). The span at 325–338 (PQPTTQTPSQNLTS) shows a compositional bias: polar residues. 7 disulfides stabilise this stretch: Cys358–Cys485, Cys396–Cys412, Cys404–Cys474, Cys435–Cys438, Cys501–Cys570, Cys533–Cys549, and Cys560–Cys591. One can recognise a Peptidase S1 domain in the interval 372–615 (IVGGLVALPG…YLAWIQEHTT (244 aa)). Residue His411 is the Charge relay system of the active site. N-linked (GlcNAc...) asparagine glycosylation occurs at Asn432. The active-site Charge relay system is Asp460. The active-site Charge relay system is Ser564.

Belongs to the peptidase S1 family. Interacts with HRG; the interaction, which is enhanced in the presence of zinc ions and inhibited by heparin-binding, inhibits factor XII autoactivation and contact-initiated coagulation. In terms of processing, O- and N-glycosylated.

It localises to the secreted. It catalyses the reaction Selective cleavage of Arg-|-Ile bonds in factor VII to form factor VIIa and factor XI to form factor XIa.. Its activity is regulated as follows. Activity is promoted in the presence of negatively charged surfaces. Factor XII is a serum glycoprotein that participates in the initiation of blood coagulation, fibrinolysis, and the generation of bradykinin and angiotensin. Prekallikrein is cleaved by factor XII to form kallikrein, which then cleaves factor XII first to alpha-factor XIIa and then trypsin cleaves it to beta-factor XIIa. Alpha-factor XIIa activates factor XI to factor XIa. This is Coagulation factor XII (F12) from Sus scrofa (Pig).